A 287-amino-acid chain; its full sequence is Nuclease S1 (287 aa).

An N-terminal signal peptide occupies residues 1–20 (MPRLLPISAATLALAQLTYG). 4 residues coordinate a divalent metal cation: Trp-21, His-26, Asp-65, and His-80. Residues 21-26 (WGNLGH), 65-71 (DTYKYTD), 80-83 (HFID), and 93-98 (GVDYDR) each bind substrate. 2 disulfides stabilise this stretch: Cys-92–Cys-236 and Cys-100–Cys-105. Residues Asn-112 and Asn-122 are each glycosylated (N-linked (GlcNAc...) asparagine). The a divalent metal cation site is built by His-135, Asp-139, His-145, His-168, and Asp-172. Positions 135–183 (HIIGDIHQPLHDENLEAGGNGIDVTYDGETTNLHHIWDTNMPEEAAGGY) are substrate binding. Asn-248 carries an N-linked (GlcNAc...) asparagine glycan.

This sequence belongs to the nuclease type I family. Monomer. Zn(2+) is required as a cofactor.

It catalyses the reaction Endonucleolytic cleavage to 5'-phosphomononucleotide and 5'-phosphooligonucleotide end-products.. Inhibited by inorganic phosphate (Pi). In terms of biological role, hydrolyzes only single-stranded DNA and RNA without apparent specificity for bases. This is Nuclease S1 from Aspergillus oryzae (strain ATCC 42149 / RIB 40) (Yellow koji mold).